A 71-amino-acid chain; its full sequence is Small ribosomal subunit protein bS21 (71 aa).

It belongs to the bacterial ribosomal protein bS21 family.

The polypeptide is Small ribosomal subunit protein bS21 (Shewanella amazonensis (strain ATCC BAA-1098 / SB2B)).